The sequence spans 401 residues: Acetylornithine aminotransferase (401 aa).

Residues 121–122 (GA) and phenylalanine 154 each bind pyridoxal 5'-phosphate. Arginine 157 contacts N(2)-acetyl-L-ornithine. 239-242 (DEVQ) provides a ligand contact to pyridoxal 5'-phosphate. At lysine 268 the chain carries N6-(pyridoxal phosphate)lysine. Residue serine 296 coordinates N(2)-acetyl-L-ornithine. Threonine 297 contributes to the pyridoxal 5'-phosphate binding site.

Belongs to the class-III pyridoxal-phosphate-dependent aminotransferase family. ArgD subfamily. As to quaternary structure, homodimer. Pyridoxal 5'-phosphate serves as cofactor.

It is found in the cytoplasm. The catalysed reaction is N(2)-acetyl-L-ornithine + 2-oxoglutarate = N-acetyl-L-glutamate 5-semialdehyde + L-glutamate. Its pathway is amino-acid biosynthesis; L-arginine biosynthesis; N(2)-acetyl-L-ornithine from L-glutamate: step 4/4. This Myxococcus xanthus protein is Acetylornithine aminotransferase.